The following is a 119-amino-acid chain: MAFDPASLTFDANGLIPAVAQDHATGEVLMMAWMNAEAVARTLETGRVTYWSRSRQAFWVKGETSGHVQRLIELRIDCDRDCLLLLIEQEGPACHTNRRSCFYTALREGEERIVLDPMV.

Residue Asp77 coordinates Mg(2+). Cys78 is a binding site for Zn(2+). Mg(2+) is bound by residues Asp79 and Asp81. Zn(2+) contacts are provided by Cys94 and Cys101.

It belongs to the PRA-CH family. In terms of assembly, homodimer. Mg(2+) serves as cofactor. Requires Zn(2+) as cofactor.

It localises to the cytoplasm. It carries out the reaction 1-(5-phospho-beta-D-ribosyl)-5'-AMP + H2O = 1-(5-phospho-beta-D-ribosyl)-5-[(5-phospho-beta-D-ribosylamino)methylideneamino]imidazole-4-carboxamide. The protein operates within amino-acid biosynthesis; L-histidine biosynthesis; L-histidine from 5-phospho-alpha-D-ribose 1-diphosphate: step 3/9. In terms of biological role, catalyzes the hydrolysis of the adenine ring of phosphoribosyl-AMP. The polypeptide is Phosphoribosyl-AMP cyclohydrolase (Cereibacter sphaeroides (strain KD131 / KCTC 12085) (Rhodobacter sphaeroides)).